Here is a 99-residue protein sequence, read N- to C-terminus: PE-PGRS family protein PE25 (99 aa).

The 92-residue stretch at 1–92 (MSFVITNPEA…GADKYATAEA (92 aa)) folds into the PE domain. The residue at position 2 (Ser-2) is an N-acetylserine.

Belongs to the mycobacterial PE family. In terms of assembly, forms a heterodimer with PPE41. The dimer forms a 1:1:1 heterotrimeric complex with EspG5. Interacts with PPE51.

The protein localises to the secreted. The PE25/PPE41 dimer induces both a strong humoral and cellular immune response. PE25 protein alone induces low response. The dimer induces necrosis, but not apoptosis, in mouse macrophage cells. It also induces activation and maturation of mouse dendritic cells and drives Th2-biased immune responses. The sequence is that of PE-PGRS family protein PE25 from Mycobacterium tuberculosis (strain ATCC 25618 / H37Rv).